The following is a 255-amino-acid chain: MGKTSVLLTNDDGVQAKGILYLAEYLKENGFDVVVVAPEKERSAISHAITLHKPLRLKPVREEENLRIYAINGTPSDCVKMGIEVVMEKNPDIIISGINNGLNMGTDILYSGTVSAAIEGALYGIPALAVSLEEDGDFEEQRMYIFLKKLIEKVLEEGLPKNTLLNVNIPDFRKGINGIRITILGKRIYTETFQKNYDPRGKEYYWMAGKISEIDNDERTDIVSVKKGYISITPIHFDLTDYEAVKKLSSWKIDI.

A divalent metal cation is bound by residues Asp-11, Asp-12, Ser-43, and Asn-99.

The protein belongs to the SurE nucleotidase family. The cofactor is a divalent metal cation.

It is found in the cytoplasm. It carries out the reaction a ribonucleoside 5'-phosphate + H2O = a ribonucleoside + phosphate. In terms of biological role, nucleotidase that shows phosphatase activity on nucleoside 5'-monophosphates. The polypeptide is 5'-nucleotidase SurE (Caldanaerobacter subterraneus subsp. tengcongensis (strain DSM 15242 / JCM 11007 / NBRC 100824 / MB4) (Thermoanaerobacter tengcongensis)).